A 602-amino-acid chain; its full sequence is Elongation factor 4 (602 aa).

A tr-type G domain is found at 7–189 (ARLRNFCIIA…SVVDRIPPPK (183 aa)). Residues 19–24 (DHGKST) and 136–139 (NKVD) contribute to the GTP site.

This sequence belongs to the TRAFAC class translation factor GTPase superfamily. Classic translation factor GTPase family. LepA subfamily.

The protein resides in the cell inner membrane. The catalysed reaction is GTP + H2O = GDP + phosphate + H(+). Its function is as follows. Required for accurate and efficient protein synthesis under certain stress conditions. May act as a fidelity factor of the translation reaction, by catalyzing a one-codon backward translocation of tRNAs on improperly translocated ribosomes. Back-translocation proceeds from a post-translocation (POST) complex to a pre-translocation (PRE) complex, thus giving elongation factor G a second chance to translocate the tRNAs correctly. Binds to ribosomes in a GTP-dependent manner. This is Elongation factor 4 from Prochlorococcus marinus (strain SARG / CCMP1375 / SS120).